The chain runs to 123 residues: Protein Wnt-7a (123 aa).

Serine 1 carries the O-palmitoleoyl serine; by PORCN lipid modification. The tract at residues 33-61 (VEPVRASRNKRPTFLKIKKPLSYRKPMDT) is disordered linker. Cysteine 89 and cysteine 104 are disulfide-bonded. N-linked (GlcNAc...) asparagine glycosylation is present at asparagine 90.

Belongs to the Wnt family. Forms a soluble 1:1 complex with AFM; this prevents oligomerization and is required for prolonged biological activity. The complex with AFM may represent the physiological form in body fluids. Interacts with FZD5. Interacts with PORCN. In terms of processing, palmitoleoylation is required for efficient binding to frizzled receptors. Depalmitoleoylation leads to Wnt signaling pathway inhibition.

It is found in the secreted. It localises to the extracellular space. The protein localises to the extracellular matrix. Its function is as follows. Ligand for members of the frizzled family of seven transmembrane receptors that functions in the canonical Wnt/beta-catenin signaling pathway. Plays an important role in embryonic development, including dorsal versus ventral patterning during limb development, skeleton development and urogenital tract development. Required for central nervous system (CNS) angiogenesis and blood-brain barrier regulation. The sequence is that of Protein Wnt-7a (WNT7A) from Meleagris gallopavo (Wild turkey).